The sequence spans 80 residues: Cell division protein ZapB (80 aa).

The stretch at 3 to 80 forms a coiled coil; sequence FEVLEKLEAK…SLLGKMEDVE (78 aa).

Belongs to the ZapB family. Homodimer. The ends of the coiled-coil dimer bind to each other, forming polymers. Interacts with FtsZ.

The protein resides in the cytoplasm. Its function is as follows. Non-essential, abundant cell division factor that is required for proper Z-ring formation. It is recruited early to the divisome by direct interaction with FtsZ, stimulating Z-ring assembly and thereby promoting cell division earlier in the cell cycle. Its recruitment to the Z-ring requires functional FtsA or ZipA. The chain is Cell division protein ZapB from Vibrio cholerae serotype O1 (strain ATCC 39541 / Classical Ogawa 395 / O395).